A 380-amino-acid polypeptide reads, in one-letter code: Cytochrome b (380 aa).

Helical transmembrane passes span 33 to 53, 77 to 98, 113 to 133, and 178 to 198; these read FGSLLGLCLITQVLTGLFLAM, WLLRNIHANGASFFFICIYLHI, WNIGVLLLLLVMMTAFVGYVL, and FFTFHFLLPFIIMGATMLHLL. Residues His-83 and His-97 each contribute to the heme b site. Positions 182 and 196 each coordinate heme b. His-201 contacts a ubiquinone. A run of 4 helical transmembrane segments spans residues 226-246, 288-308, 320-340, and 347-367; these read YKDLLGFTILLAILSALALLN, LGGVLALLLSILILVVVPVLH, PSQTLFWILVANMLVLTWIGG, and FIIIGQIASVLYFMLFLILIP.

Belongs to the cytochrome b family. As to quaternary structure, the cytochrome bc1 complex contains 3 respiratory subunits (MT-CYB, CYC1 and UQCRFS1), 2 core proteins (UQCRC1 and UQCRC2) and probably 6 low-molecular weight proteins. Requires heme b as cofactor.

The protein localises to the mitochondrion inner membrane. In terms of biological role, component of the ubiquinol-cytochrome c reductase complex (complex III or cytochrome b-c1 complex) that is part of the mitochondrial respiratory chain. The b-c1 complex mediates electron transfer from ubiquinol to cytochrome c. Contributes to the generation of a proton gradient across the mitochondrial membrane that is then used for ATP synthesis. The protein is Cytochrome b (mt-cyb) of Atractosteus spatula (Alligator gar).